The chain runs to 503 residues: uncharacterized protein (503 aa).

Disordered regions lie at residues 1–26 and 132–156; these read MADD…SPTT and DQQQ…DNSM. The segment covering 16-26 has biased composition (low complexity); it reads AQSSVPTSPTT. Residues 147-156 show a composition bias toward polar residues; it reads TPNSVDDNSM.

This is an uncharacterized protein from Caenorhabditis elegans.